A 215-amino-acid chain; its full sequence is Phosphatidylserine decarboxylase proenzyme (215 aa).

Ser-185 acts as the Schiff-base intermediate with substrate; via pyruvic acid in catalysis. Position 185 is a pyruvic acid (Ser); by autocatalysis (Ser-185).

Belongs to the phosphatidylserine decarboxylase family. PSD-A subfamily. As to quaternary structure, heterodimer of a large membrane-associated beta subunit and a small pyruvoyl-containing alpha subunit. The cofactor is pyruvate. Post-translationally, is synthesized initially as an inactive proenzyme. Formation of the active enzyme involves a self-maturation process in which the active site pyruvoyl group is generated from an internal serine residue via an autocatalytic post-translational modification. Two non-identical subunits are generated from the proenzyme in this reaction, and the pyruvate is formed at the N-terminus of the alpha chain, which is derived from the carboxyl end of the proenzyme. The post-translation cleavage follows an unusual pathway, termed non-hydrolytic serinolysis, in which the side chain hydroxyl group of the serine supplies its oxygen atom to form the C-terminus of the beta chain, while the remainder of the serine residue undergoes an oxidative deamination to produce ammonia and the pyruvoyl prosthetic group on the alpha chain.

The protein localises to the cell membrane. It catalyses the reaction a 1,2-diacyl-sn-glycero-3-phospho-L-serine + H(+) = a 1,2-diacyl-sn-glycero-3-phosphoethanolamine + CO2. Its pathway is phospholipid metabolism; phosphatidylethanolamine biosynthesis; phosphatidylethanolamine from CDP-diacylglycerol: step 2/2. In terms of biological role, catalyzes the formation of phosphatidylethanolamine (PtdEtn) from phosphatidylserine (PtdSer). The protein is Phosphatidylserine decarboxylase proenzyme of Streptomyces avermitilis (strain ATCC 31267 / DSM 46492 / JCM 5070 / NBRC 14893 / NCIMB 12804 / NRRL 8165 / MA-4680).